The following is a 570-amino-acid chain: Urease subunit alpha 1 (570 aa).

Positions 131-570 (GGIDTHVHFI…VPMAQRYFLF (440 aa)) constitute a Urease domain. H136, H138, and K219 together coordinate Ni(2+). K219 carries the post-translational modification N6-carboxylysine. H221 is a substrate binding site. Ni(2+)-binding residues include H248 and H274. The active-site Proton donor is the H322. D362 contributes to the Ni(2+) binding site.

It belongs to the metallo-dependent hydrolases superfamily. Urease alpha subunit family. In terms of assembly, heterotrimer of UreA (gamma), UreB (beta) and UreC (alpha) subunits. Three heterotrimers associate to form the active enzyme. Ni cation serves as cofactor. In terms of processing, carboxylation allows a single lysine to coordinate two nickel ions.

The protein localises to the cytoplasm. The catalysed reaction is urea + 2 H2O + H(+) = hydrogencarbonate + 2 NH4(+). It participates in nitrogen metabolism; urea degradation; CO(2) and NH(3) from urea (urease route): step 1/1. Disrupting the ure1 operon causes loss of urease activity, decreased resistance to low pH killing in vitro and decreased pathogen survival when inoculated in BALB/c mice by gavage. The chain is Urease subunit alpha 1 from Brucella suis biovar 1 (strain 1330).